The primary structure comprises 129 residues: Profilin-4 (129 aa).

This sequence belongs to the profilin family.

Its subcellular location is the cytoplasm. Functionally, involved in male fertility. Required for manchette development and acrosome biogenesis during spermiogenesis. Binds in vitro to phospholipids, including phosphatidylinositol 3-phosphate (PtdIns(3)P), phosphatidylinositol 4,5-bisphosphate (PtdIns(4,5)P2), phosphatidylinositol 4-phosphate (PtdIns(4)P) and phosphatidic acid (PA). Contrary to other profilin family members, does not bind to actin in vitro. The chain is Profilin-4 (PFN4) from Bos taurus (Bovine).